The chain runs to 70 residues: Large ribosomal subunit protein bL31 (70 aa).

C16, C18, C38, and C41 together coordinate Zn(2+).

It belongs to the bacterial ribosomal protein bL31 family. Type A subfamily. In terms of assembly, part of the 50S ribosomal subunit. Zn(2+) is required as a cofactor.

Its function is as follows. Binds the 23S rRNA. The chain is Large ribosomal subunit protein bL31 from Vesicomyosocius okutanii subsp. Calyptogena okutanii (strain HA).